A 647-amino-acid chain; its full sequence is DNA mismatch repair protein MutL (647 aa).

The protein belongs to the DNA mismatch repair MutL/HexB family.

This protein is involved in the repair of mismatches in DNA. It is required for dam-dependent methyl-directed DNA mismatch repair. May act as a 'molecular matchmaker', a protein that promotes the formation of a stable complex between two or more DNA-binding proteins in an ATP-dependent manner without itself being part of a final effector complex. In Bacillus cereus (strain G9842), this protein is DNA mismatch repair protein MutL.